Here is a 322-residue protein sequence, read N- to C-terminus: Glutamyl-Q tRNA(Asp) synthetase (322 aa).

L-glutamate contacts are provided by residues 28–32 (RFAPS) and Glu64. Residues 31–41 (PSPSGDLHFGS) carry the 'HIGH' region motif. Zn(2+) is bound by residues Cys120, Cys122, Tyr134, and Cys138. Positions 191 and 209 each coordinate L-glutamate. A 'KMSKS' region motif is present at residues 247-251 (KLSKQ). Lys250 contacts ATP.

It belongs to the class-I aminoacyl-tRNA synthetase family. GluQ subfamily. It depends on Zn(2+) as a cofactor.

Catalyzes the tRNA-independent activation of glutamate in presence of ATP and the subsequent transfer of glutamate onto a tRNA(Asp). Glutamate is transferred on the 2-amino-5-(4,5-dihydroxy-2-cyclopenten-1-yl) moiety of the queuosine in the wobble position of the QUC anticodon. The polypeptide is Glutamyl-Q tRNA(Asp) synthetase (Pectobacterium atrosepticum (strain SCRI 1043 / ATCC BAA-672) (Erwinia carotovora subsp. atroseptica)).